The chain runs to 111 residues: Cyanovirin-N homolog (111 aa).

Belongs to the cyanovirin-N family.

In terms of biological role, mannose-binding lectin. In Neurospora crassa (strain ATCC 24698 / 74-OR23-1A / CBS 708.71 / DSM 1257 / FGSC 987), this protein is Cyanovirin-N homolog.